A 216-amino-acid polypeptide reads, in one-letter code: Uracil phosphoribosyltransferase (216 aa).

Residues Arg85, Arg110, and 136–144 each bind 5-phospho-alpha-D-ribose 1-diphosphate; that span reads DPMLATGNS. Uracil is bound by residues Ile201 and 206-208; that span reads GDA. Asp207 provides a ligand contact to 5-phospho-alpha-D-ribose 1-diphosphate.

The protein belongs to the UPRTase family. Mg(2+) is required as a cofactor.

The catalysed reaction is UMP + diphosphate = 5-phospho-alpha-D-ribose 1-diphosphate + uracil. Its pathway is pyrimidine metabolism; UMP biosynthesis via salvage pathway; UMP from uracil: step 1/1. Allosterically activated by GTP. In terms of biological role, catalyzes the conversion of uracil and 5-phospho-alpha-D-ribose 1-diphosphate (PRPP) to UMP and diphosphate. The chain is Uracil phosphoribosyltransferase from Rhodospirillum centenum (strain ATCC 51521 / SW).